We begin with the raw amino-acid sequence, 357 residues long: Guanine nucleotide-binding protein alpha-16 subunit (357 aa).

Glycine 2 carries the N-myristoyl glycine lipid modification. Cysteine 3 carries the S-palmitoyl cysteine lipid modification. One can recognise a G-alpha domain in the interval 32 to 357 (RTIKLLLLGA…RDNLRTCGLY (326 aa)). Positions 35 to 48 (KLLLLGAGESGKST) are G1 motif. Residues 40–47 (GAGESGKS), 175–181 (LRTRIKT), 200–204 (DVGGQ), 269–272 (NKKD), and alanine 329 each bind GTP. 2 residues coordinate Mg(2+): serine 47 and threonine 181. A G2 motif region spans residues 173-181 (DILRTRIKT). The interval 196–205 (FLVFDVGGQR) is G3 motif. Positions 265–272 (ILFLNKKD) are G4 motif. Residues 327-332 (TCATDT) are G5 motif.

This sequence belongs to the G-alpha family. G proteins are composed of 3 units; alpha, beta and gamma. The alpha chain contains the guanine nucleotide binding site.

Its function is as follows. Guanine nucleotide-binding proteins (G proteins) are involved as modulators or transducers in various transmembrane signaling systems. In the 1-cell embryo, probably together with goa-1, controls nuclear rotation and spindle elongation during mitosis. During the first embryonic cell divisons, plays a role in gpr-1/2 cortical localization and in the proper orientation of EMS blastomere mitotic spindle. The protein is Guanine nucleotide-binding protein alpha-16 subunit (gpa-16) of Caenorhabditis elegans.